Reading from the N-terminus, the 343-residue chain is Anthranilate phosphoribosyltransferase (343 aa).

5-phospho-alpha-D-ribose 1-diphosphate-binding positions include G85, G88–D89, T93, N95–T98, K113–S121, and A125. G85 is a binding site for anthranilate. Residue S97 participates in Mg(2+) binding. An anthranilate-binding site is contributed by R171. Positions 230 and 231 each coordinate Mg(2+).

It belongs to the anthranilate phosphoribosyltransferase family. Homodimer. Requires Mg(2+) as cofactor.

It carries out the reaction N-(5-phospho-beta-D-ribosyl)anthranilate + diphosphate = 5-phospho-alpha-D-ribose 1-diphosphate + anthranilate. The protein operates within amino-acid biosynthesis; L-tryptophan biosynthesis; L-tryptophan from chorismate: step 2/5. Its function is as follows. Catalyzes the transfer of the phosphoribosyl group of 5-phosphorylribose-1-pyrophosphate (PRPP) to anthranilate to yield N-(5'-phosphoribosyl)-anthranilate (PRA). This Aromatoleum aromaticum (strain DSM 19018 / LMG 30748 / EbN1) (Azoarcus sp. (strain EbN1)) protein is Anthranilate phosphoribosyltransferase.